The chain runs to 201 residues: Ras-related protein Rab-9B (201 aa).

GTP contacts are provided by valine 18, glycine 19, lysine 20, serine 21, serine 22, aspartate 33, serine 34, alanine 36, histidine 38, and threonine 39. Serine 21 contacts Mg(2+). Residues 31–42 (KFDSQAFHTIGV) carry the Switch 1 motif. The residue at position 34 (serine 34) is a Phosphoserine. Residues threonine 39 and aspartate 62 each contribute to the Mg(2+) site. A Switch 2 motif is present at residues 64 to 78 (AGQERFKSLRTPFYR). Positions 65, 124, 125, 155, and 156 each coordinate GTP. Residues cysteine 200 and cysteine 201 are each lipidated (S-geranylgeranyl cysteine).

Belongs to the small GTPase superfamily. Rab family. Interacts (GTP-bound form) with SGSM1; the GDP-bound form has much lower affinity for SGSM1. The GTP-bound form but not the GDP-bound form interacts with HPS4 and the BLOC-3 complex (heterodimer of HPS1 and HPS4) but does not interact with HPS1 alone. Interacts (GTP-bound form) with NDE1. Mg(2+) is required as a cofactor. Ubiquitous.

The protein resides in the cell membrane. The protein localises to the cytoplasmic vesicle. It is found in the phagosome. It localises to the phagosome membrane. The enzyme catalyses GTP + H2O = GDP + phosphate + H(+). With respect to regulation, regulated by guanine nucleotide exchange factors (GEFs) which promote the exchange of bound GDP for free GTP. Regulated by GTPase activating proteins (GAPs) which increase the GTP hydrolysis activity. Inhibited by GDP dissociation inhibitors (GDIs). In terms of biological role, the small GTPases Rab are key regulators of intracellular membrane trafficking, from the formation of transport vesicles to their fusion with membranes. Rabs cycle between an inactive GDP-bound form and an active GTP-bound form that is able to recruit to membranes different sets of downstream effectors directly responsible for vesicle formation, movement, tethering and fusion. RAB9B is involved in the transport of proteins between the endosomes and the trans Golgi network. May use NDE1/NDEL1 as an effector to interact with the dynein motor complex in order to control retrograde trafficking of RAB9-associated late endosomes to the TGN. This chain is Ras-related protein Rab-9B, found in Homo sapiens (Human).